The sequence spans 2492 residues: Talin-A (2492 aa).

Positions 84–365 (RPQKFKLLDG…GYIEIIMKAR (282 aa)) constitute an FERM domain. The 243-residue stretch at 2250–2492 (EEDNVLEDLE…NSRKQNYNKN (243 aa)) folds into the I/LWEQ domain.

It localises to the cytoplasm. The protein localises to the cytoskeleton. It is found in the cell cortex. In terms of biological role, actin-binding protein that may be involved in the control of cell motility and chemotaxis. The protein is Talin-A (talA) of Dictyostelium discoideum (Social amoeba).